We begin with the raw amino-acid sequence, 256 residues long: Agamous-like MADS-box protein AGL18 (256 aa).

The MADS-box domain occupies 1–61 (MGRGRIEIKK…GKIYDFSSVC (61 aa)). In terms of domain architecture, K-box spans 94-184 (NEAVLRNDDS…RKQVEMLGRG (91 aa)). Residues 179 to 232 (EMLGRGSGPKVLNERPQDSSPEADPESSSSEEDENDNEEHHSDTSLQLGLSSTG) form a disordered region. The span at 199–215 (PEADPESSSSEEDENDN) shows a compositional bias: acidic residues. The span at 222–232 (TSLQLGLSSTG) shows a compositional bias: polar residues.

As to expression, mostly expressed in pollen, roots, flowers and siliques, and to a lower extent, in stems and leaves. Expressed in the endosperm and in developing male and female gametophytes. Also present in seedlings.

It localises to the nucleus. Its function is as follows. Probable transcription factor involved in the negative regulation of flowering, probably through the photoperiodic pathway. Prevents premature flowering. Downstream regulator of a subset of the MIKC* MADS-controlled genes required during pollen maturation. In Arabidopsis thaliana (Mouse-ear cress), this protein is Agamous-like MADS-box protein AGL18 (AGL18).